The sequence spans 338 residues: Lipoate-protein ligase A (338 aa).

The BPL/LPL catalytic domain occupies 29–216 (PTTQRVLFLW…AFFDYFGEQC (188 aa)). Residues R71, 76–79 (GAVF), and K134 each bind ATP. K134 is a (R)-lipoate binding site.

It belongs to the LplA family. In terms of assembly, monomer.

The protein resides in the cytoplasm. The enzyme catalyses L-lysyl-[lipoyl-carrier protein] + (R)-lipoate + ATP = N(6)-[(R)-lipoyl]-L-lysyl-[lipoyl-carrier protein] + AMP + diphosphate + H(+). It functions in the pathway protein modification; protein lipoylation via exogenous pathway; protein N(6)-(lipoyl)lysine from lipoate: step 1/2. The protein operates within protein modification; protein lipoylation via exogenous pathway; protein N(6)-(lipoyl)lysine from lipoate: step 2/2. Its function is as follows. Catalyzes both the ATP-dependent activation of exogenously supplied lipoate to lipoyl-AMP and the transfer of the activated lipoyl onto the lipoyl domains of lipoate-dependent enzymes. This Pectobacterium carotovorum subsp. carotovorum (strain PC1) protein is Lipoate-protein ligase A.